We begin with the raw amino-acid sequence, 364 residues long: Flavonoid 3'-O-methyltransferase 3 (364 aa).

Aspartate 232 serves as a coordination point for S-adenosyl-L-methionine. The active-site Proton acceptor is histidine 270.

Belongs to the class I-like SAM-binding methyltransferase superfamily. Cation-independent O-methyltransferase family. In terms of assembly, homodimer.

It carries out the reaction quercetin + S-adenosyl-L-methionine = isorhamnetin + S-adenosyl-L-homocysteine + H(+). The catalysed reaction is luteolin + S-adenosyl-L-methionine = chrysoeriol + S-adenosyl-L-homocysteine + H(+). The enzyme catalyses a 3'-hydroxyflavone + S-adenosyl-L-methionine = a 3'-methoxyflavone + S-adenosyl-L-homocysteine + H(+). It catalyses the reaction rhamnetin + S-adenosyl-L-methionine = rhamnacene + S-adenosyl-L-homocysteine + H(+). It carries out the reaction 3',4',7,8-tetrahydroxyflavone + S-adenosyl-L-methionine = 4',7,8-trihydroxy-3'-methoxyflavone-7-olate + S-adenosyl-L-homocysteine + H(+). The catalysed reaction is taxifolin + S-adenosyl-L-methionine = taxifolin 3'-methyl ether + S-adenosyl-L-homocysteine + H(+). It participates in flavonoid metabolism. In terms of biological role, flavonoid 3'-O-methyltransferase involved in the biosynthesis of polymethoxylated flavonoids natural products such as pebrellin, aroma compounds which contribute to the flavor of peppermint, and exhibit pharmacological activities such as anti-allergic, anti-oxidant, antibacterial, anti-proliferative, and anti-inflammatory effects. Catalyzes S-adenosylmethionine-dependent regioselective 3'-O-methylation of flavonoids; active on various hydroxylated flavonoid substrates, including quercetin, rhamnetin, luteolin (LUT), 7,8,3'4'-tetrahydroxy-flavone and taxifolin, and, with a lower efficiency, eupatorin and hesperetin. In Mentha piperita (Peppermint), this protein is Flavonoid 3'-O-methyltransferase 3.